Consider the following 880-residue polypeptide: Lon protease (880 aa).

Residues 1–37 are disordered; the sequence is MADYNDKNYLLHMSGPDSDTGPGIENEDPRAVENPGH. Basic and acidic residues predominate over residues 27–37; that stretch reads EDPRAVENPGH. One can recognise a Lon N-terminal domain in the interval 57 to 251; the sequence is LPILPVRDVV…LVNTQLQREV (195 aa). 404-411 serves as a coordination point for ATP; that stretch reads GPPGVGKT. A Lon proteolytic domain is found at 640–821; it reads KLMPGMALGL…DELLPLVFEG (182 aa). Residues Ser727 and Lys770 contribute to the active site. The segment covering 826 to 836 has biased composition (gly residues); sequence GGVSGAGQAGD. The interval 826-880 is disordered; the sequence is GGVSGAGQAGDKGGKSKAAAGKKDVVAARPAKPAAPARRRKDKTEDELPTAEAGA. A compositionally biased stretch (low complexity) spans 852–861; it reads AARPAKPAAP.

This sequence belongs to the peptidase S16 family. Homohexamer. Organized in a ring with a central cavity.

The protein localises to the cytoplasm. The catalysed reaction is Hydrolysis of proteins in presence of ATP.. In terms of biological role, ATP-dependent serine protease that mediates the selective degradation of mutant and abnormal proteins as well as certain short-lived regulatory proteins. Required for cellular homeostasis and for survival from DNA damage and developmental changes induced by stress. Degrades polypeptides processively to yield small peptide fragments that are 5 to 10 amino acids long. Binds to DNA in a double-stranded, site-specific manner. In Desulfovibrio desulfuricans (strain ATCC 27774 / DSM 6949 / MB), this protein is Lon protease.